The primary structure comprises 282 residues: NH(3)-dependent NAD(+) synthetase (282 aa).

Residue 51–58 (GISGGVDS) participates in ATP binding. Position 57 (D57) interacts with Mg(2+). R148 lines the deamido-NAD(+) pocket. T168 contributes to the ATP binding site. Mg(2+) is bound at residue E173. Deamido-NAD(+) is bound by residues K181 and D188. ATP-binding residues include K197 and T219. 268-269 (HK) lines the deamido-NAD(+) pocket.

It belongs to the NAD synthetase family. In terms of assembly, homodimer.

It catalyses the reaction deamido-NAD(+) + NH4(+) + ATP = AMP + diphosphate + NAD(+) + H(+). The protein operates within cofactor biosynthesis; NAD(+) biosynthesis; NAD(+) from deamido-NAD(+) (ammonia route): step 1/1. In terms of biological role, catalyzes the ATP-dependent amidation of deamido-NAD to form NAD. Uses ammonia as a nitrogen source. This Burkholderia cenocepacia (strain ATCC BAA-245 / DSM 16553 / LMG 16656 / NCTC 13227 / J2315 / CF5610) (Burkholderia cepacia (strain J2315)) protein is NH(3)-dependent NAD(+) synthetase.